A 703-amino-acid chain; its full sequence is Hyperosmolality-gated Ca2+ permeable channel 2.3 (703 aa).

The Extracellular segment spans residues 1 to 3; sequence MLL. Residues 4–26 form a helical membrane-spanning segment; it reads SALLTSVGINLGLCFLFFTLYSI. The Cytoplasmic segment spans residues 27–81; the sequence is LRKQPSNVTVYGPRLVKKDGKSQQSNEFNLERLLPTAGWVKRALEPTNDEILSNL. A helical transmembrane segment spans residues 82–115; the sequence is GLDALVFIRVFVFSIRVFSFASVVGIFILLPVNY. At 116 to 143 the chain is on the extracellular side; it reads MGTEFEEFFDLPKKSMDNFSISNVNDGS. The helical transmembrane segment at 144 to 165 threads the bilayer; the sequence is NKLWIHFCAIYIFTAVVCSLLY. The Cytoplasmic segment spans residues 166 to 355; it reads YEHKYILTKR…TASFVRRWIS (190 aa). Residues 228–300 are a coiled coil; the sequence is RTDKLKVLMN…LKQSLLAGEE (73 aa). Residues 356-382 traverse the membrane as a helical segment; it reads NVVVLVAFVALLILYIVPVVLVQGLAN. The Extracellular segment spans residues 383 to 410; sequence LHQLETWFPFLKGILNMKIVSQVITGYL. The chain crosses the membrane as a helical span at residues 411–432; it reads PSLIFQLFLLIVPPIMLLLSSM. Over 433-436 the chain is Cytoplasmic; that stretch reads QGFI. The helical transmembrane segment at 437 to 463 threads the bilayer; that stretch reads SHSQIEKSACIKLLIFTVWNSFFANVL. Residues 464–489 lie on the Extracellular side of the membrane; it reads SGSALYRVNVFLEPKTIPRVLAAAVP. Residues 490–512 form a helical membrane-spanning segment; the sequence is AQASFFVSYVVTSGWTGLSSEIL. Residues 513–540 lie on the Cytoplasmic side of the membrane; it reads RLVPLLWSFITKLFGKEDDKEFEVPSTP. A helical transmembrane segment spans residues 541–561; sequence FCQEIPRILFFGLLGITYFFL. A topological domain (extracellular) is located at residue Ser562. The helical transmembrane segment at 563–586 threads the bilayer; it reads PLILPFLLVYYCLGYIIYRNQLLN. Topologically, residues 587 to 598 are cytoplasmic; that stretch reads VYAAKYETGGKF. The helical transmembrane segment at 599 to 623 threads the bilayer; the sequence is WPIVHSYTIFSLVLMHIIAVGLFGL. Residues 624 to 626 lie on the Extracellular side of the membrane; the sequence is KEL. A helical membrane pass occupies residues 627 to 655; that stretch reads PVASSLTIPLPVLTVLFSIYCQRRFLPNF. The Cytoplasmic segment spans residues 656–703; it reads KSYPTQCLVNKDKADEREQNMSEFYSELVVAYRDPALSASQDSRDISP.

The protein belongs to the CSC1 (TC 1.A.17) family. As to quaternary structure, homodimer.

Its subcellular location is the membrane. Functionally, acts as an osmosensitive calcium-permeable cation channel. This is Hyperosmolality-gated Ca2+ permeable channel 2.3 from Arabidopsis thaliana (Mouse-ear cress).